Here is a 218-residue protein sequence, read N- to C-terminus: Protein GrpE (218 aa).

The segment covering 1–21 (MSDKQREAERQQSEDKAHSEA) has biased composition (basic and acidic residues). The disordered stretch occupies residues 1 to 66 (MSDKQREAER…LEEARARAEE (66 aa)). Low complexity predominate over residues 24-36 (AEAGQAPEAQAAE).

It belongs to the GrpE family. In terms of assembly, homodimer.

The protein localises to the cytoplasm. Functionally, participates actively in the response to hyperosmotic and heat shock by preventing the aggregation of stress-denatured proteins, in association with DnaK and GrpE. It is the nucleotide exchange factor for DnaK and may function as a thermosensor. Unfolded proteins bind initially to DnaJ; upon interaction with the DnaJ-bound protein, DnaK hydrolyzes its bound ATP, resulting in the formation of a stable complex. GrpE releases ADP from DnaK; ATP binding to DnaK triggers the release of the substrate protein, thus completing the reaction cycle. Several rounds of ATP-dependent interactions between DnaJ, DnaK and GrpE are required for fully efficient folding. This is Protein GrpE from Alkalilimnicola ehrlichii (strain ATCC BAA-1101 / DSM 17681 / MLHE-1).